The primary structure comprises 172 residues: Alpha-crystallin A chain (172 aa).

At methionine 1 the chain carries N-acetylmethionine. The tract at residues 1–63 (MDVTIQHPWF…RTVLDSGISE (63 aa)) is required for complex formation with BFSP1 and BFSP2. Deamidated glutamine; partial is present on glutamine 6. A Phosphoserine modification is found at serine 45. Glutamine 50 carries the post-translational modification Deamidated glutamine; partial. The 112-residue stretch at 52–163 (LFRTVLDSGI…HERAIPVARE (112 aa)) folds into the sHSP domain. Lysine 70 carries the N6-acetyllysine modification. The residue at position 90 (glutamine 90) is a Deamidated glutamine; partial. Position 99 is an N6-acetyllysine (lysine 99). Residue histidine 100 coordinates Zn(2+). Asparagine 101 is subject to Deamidated asparagine; partial. Residues glutamate 102 and histidine 107 each contribute to the Zn(2+) site. Serine 122 carries the phosphoserine modification. The residue at position 123 (asparagine 123) is a Deamidated asparagine; partial. Glutamine 147 bears the Deamidated glutamine; partial mark. Histidine 154 lines the Zn(2+) pocket. Serine 168 is a glycosylation site (O-linked (GlcNAc) serine).

It belongs to the small heat shock protein (HSP20) family. Heteromer composed of three CRYAA and one CRYAB subunits. Inter-subunit bridging via zinc ions enhances stability, which is crucial as there is no protein turn over in the lens. Can also form homodimers and homotetramers (dimers of dimers) which serve as the building blocks of homooligomers. Within homooligomers, the zinc-binding motif is created from residues of 3 different molecules. His-100 and Glu-102 from one molecule are ligands of the zinc ion, and His-107 and His-154 residues from additional molecules complete the site with tetrahedral coordination geometry. Part of a complex required for lens intermediate filament formation composed of BFSP1, BFSP2 and CRYAA. Acetylation at Lys-70 may increase chaperone activity. In terms of processing, undergoes age-dependent proteolytical cleavage at the C-terminus.

The protein resides in the cytoplasm. It localises to the nucleus. In terms of biological role, contributes to the transparency and refractive index of the lens. Acts as a chaperone, preventing aggregation of various proteins under a wide range of stress conditions. Required for the correct formation of lens intermediate filaments as part of a complex composed of BFSP1, BFSP2 and CRYAA. This is Alpha-crystallin A chain (CRYAA) from Macaca mulatta (Rhesus macaque).